Reading from the N-terminus, the 388-residue chain is Basigin (388 aa).

The N-terminal stretch at 1 to 22 is a signal peptide; sequence MAAALLLALAFTFLSGQGACAA. At 23-326 the chain is on the extracellular side; it reads AGFLKAPMSQ…ISLRVRSRLA (304 aa). The Ig-like domain maps to 37–120; the sequence is GGSVVLHCEA…SSDPDRNHLT (84 aa). Intrachain disulfides connect Cys-44–Cys-108, Cys-157–Cys-203, and Cys-242–Cys-304. The region spanning 138–219 is the Ig-like C2-type domain; it reads EPGTIVTSVQ…VGRGNINVEG (82 aa). N-linked (GlcNAc...) asparagine glycosylation is found at Asn-160, Asn-269, and Asn-305. The 100-residue stretch at 221-320 folds into the Ig-like V-type domain; sequence PRIKVGKKSE…GSARETISLR (100 aa). The helical transmembrane segment at 327 to 347 threads the bilayer; that stretch reads ALWPFLGIVAEVLVLVTIIFI. Residues 348 to 388 are Cytoplasmic-facing; sequence YEKRRKPDQTLDEDDPGAAPLKGSGSHLNDKDKNVRQRNAT. Residues 355–388 form a disordered region; that stretch reads DQTLDEDDPGAAPLKGSGSHLNDKDKNVRQRNAT. Thr-357 is modified (phosphothreonine). Ser-371 is subject to Phosphoserine.

Homooligomer. Interacts with NXNL1, SLC2A1 and SLC16A1/GLUT1. Interacts with XKR8; promoting its localization at the cell membrane. As to quaternary structure, homooligomer. Interacts with SLC16A1; interaction mediates SLC16A1 targeting to the plasma membrane. Interacts with SLC16A3; interaction mediates SLC16A3 targeting to the plasma membrane. Interacts with VEGFA, KDR/VEGFR2, PPIA/CYPA, SLC16A12, SLC16A11, ATP1B2, MAG, L1CAM and AJAP1. Interacts with PPIL2; regulates BSG transport to the cell membrane. In terms of assembly, interacts with SLC16A6; this interaction mediates targeting to the plasma membrane. Expressed in the skeletal muscle, liver, small intestine, kidney, testis, brain, heart and spleen. Also present in various immature cells and endothelia.

It is found in the cell membrane. Its subcellular location is the photoreceptor inner segment. The protein resides in the cell projection. It localises to the cilium. The protein localises to the photoreceptor outer segment. It is found in the endoplasmic reticulum membrane. Its subcellular location is the basolateral cell membrane. Essential for normal retinal maturation and development. Acts as a retinal cell surface receptor for NXNL1 and plays an important role in NXNL1-mediated survival of retinal cone photoreceptors. In association with glucose transporter SLC16A1/GLUT1 and NXNL1, promotes retinal cone survival by enhancing aerobic glycolysis and accelerating the entry of glucose into photoreceptors. In terms of biological role, signaling receptor for cyclophilins, essential for PPIA/CYPA and PPIB/CYPB-dependent signaling related to chemotaxis and adhesion of immune cells. Plays an important role in targeting the monocarboxylate transporters SLC16A1/GLUT1 and SLC16A3 to the plasma membrane. Acts as a coreceptor for vascular endothelial growth factor receptor 2 (KDR/VEGFR2) in endothelial cells enhancing its VEGFA-mediated activation and downstream signaling. Promotes angiogenesis through EPAS1/HIF2A-mediated up-regulation of VEGFA and KDR/VEGFR2 in endothelial cells. Plays an important role in spermatogenesis; mediates interactions between germ cells and Sertoli cell and is essential for the development/differentiation of germ cells to round spermatids. This chain is Basigin (Bsg), found in Rattus norvegicus (Rat).